Consider the following 375-residue polypeptide: 23S rRNA (uracil(747)-C(5))-methyltransferase RlmC (375 aa).

4 residues coordinate [4Fe-4S] cluster: Cys-3, Cys-11, Cys-14, and Cys-87. S-adenosyl-L-methionine contacts are provided by Gln-212, Phe-241, Glu-262, and Asn-307. Cys-334 functions as the Nucleophile in the catalytic mechanism.

Belongs to the class I-like SAM-binding methyltransferase superfamily. RNA M5U methyltransferase family. RlmC subfamily.

The enzyme catalyses uridine(747) in 23S rRNA + S-adenosyl-L-methionine = 5-methyluridine(747) in 23S rRNA + S-adenosyl-L-homocysteine + H(+). Catalyzes the formation of 5-methyl-uridine at position 747 (m5U747) in 23S rRNA. The chain is 23S rRNA (uracil(747)-C(5))-methyltransferase RlmC from Yersinia enterocolitica serotype O:8 / biotype 1B (strain NCTC 13174 / 8081).